Reading from the N-terminus, the 141-residue chain is uncharacterized protein (141 aa).

A disordered region spans residues 1–61 (IRLLHSLTPP…PPPPPPPRRA (61 aa)). Positions 8 to 58 (TPPPPPPPPPPPPPPPPPPPPPPPPPPPPPPPPPPPPPPPPPPPPPPPPPP) are enriched in pro residues. Residues 98–116 (KRLLVAYPVRHFLSAACQF) constitute a DNA-binding region (H-T-H motif).

This is an uncharacterized protein from Owenia fusiformis (Polychaete worm).